Reading from the N-terminus, the 250-residue chain is 3-deoxy-manno-octulosonate cytidylyltransferase (250 aa).

It belongs to the KdsB family.

Its subcellular location is the cytoplasm. The enzyme catalyses 3-deoxy-alpha-D-manno-oct-2-ulosonate + CTP = CMP-3-deoxy-beta-D-manno-octulosonate + diphosphate. It functions in the pathway nucleotide-sugar biosynthesis; CMP-3-deoxy-D-manno-octulosonate biosynthesis; CMP-3-deoxy-D-manno-octulosonate from 3-deoxy-D-manno-octulosonate and CTP: step 1/1. It participates in bacterial outer membrane biogenesis; lipopolysaccharide biosynthesis. In terms of biological role, activates KDO (a required 8-carbon sugar) for incorporation into bacterial lipopolysaccharide in Gram-negative bacteria. In Francisella tularensis subsp. novicida (strain U112), this protein is 3-deoxy-manno-octulosonate cytidylyltransferase.